We begin with the raw amino-acid sequence, 515 residues long: MMSEDGYNTDFPRNPLYIFFSDFRSVLKFDELGLEIARIALPAALALTADPIASLVDTAFIGQIGPVELAAVGVSIALFNQVSRIAIFPLVSITTSFVAEEDACSSQQDTVRDHKECIEIGINNPTEETIELIPEKHKDSLSDEFKTSSSIFSISKPPAKKRNIPSASSALIIGGVLGLFQAVFLISAAKPLLSFMGVKHDSPMMRPSQRYLSLRSLGAPAVLLSLAAQGVFRGFKDTTTPLFATVIGDVTNIILDPIFIFVFRLGVTGAATAHVISQYLMCGILLWKLMGQVDIFNMSTKHLQFCRFMKNGFLLLMRVIAVTFCVTLSASLAAREGSTSMAAFQVCLQVWLATSLLADGYAVAGQAILASAFAKKDYKRAAATASRVLQLGLVLGFVLAVILGAGLHFGARVFTKDDKVLHLISIGLPFVAGTQPINALAFVFDGVNFGASDFGYAAASLVMVAIVSILCLLFLSSTHGFIGLWFGLTIYMSLRAAVGFWRIGTGTGPWSFLRS.

The Cytoplasmic portion of the chain corresponds to 1–35; the sequence is MMSEDGYNTDFPRNPLYIFFSDFRSVLKFDELGLE. A helical transmembrane segment spans residues 36–56; the sequence is IARIALPAALALTADPIASLV. Residues 57 to 58 lie on the Extracellular side of the membrane; sequence DT. Residues 59–79 traverse the membrane as a helical segment; sequence AFIGQIGPVELAAVGVSIALF. Residues 80 to 168 lie on the Cytoplasmic side of the membrane; sequence NQVSRIAIFP…AKKRNIPSAS (89 aa). A helical transmembrane segment spans residues 169 to 189; that stretch reads SALIIGGVLGLFQAVFLISAA. Over 190–211 the chain is Extracellular; sequence KPLLSFMGVKHDSPMMRPSQRY. The chain crosses the membrane as a helical span at residues 212-232; sequence LSLRSLGAPAVLLSLAAQGVF. Over 233 to 242 the chain is Cytoplasmic; that stretch reads RGFKDTTTPL. The helical transmembrane segment at 243-263 threads the bilayer; it reads FATVIGDVTNIILDPIFIFVF. Residues 264-266 lie on the Extracellular side of the membrane; it reads RLG. Residues 267–287 traverse the membrane as a helical segment; it reads VTGAATAHVISQYLMCGILLW. Residues 288 to 312 lie on the Cytoplasmic side of the membrane; that stretch reads KLMGQVDIFNMSTKHLQFCRFMKNG. The helical transmembrane segment at 313–333 threads the bilayer; sequence FLLLMRVIAVTFCVTLSASLA. At 334-349 the chain is on the extracellular side; that stretch reads AREGSTSMAAFQVCLQ. A helical transmembrane segment spans residues 350–370; that stretch reads VWLATSLLADGYAVAGQAILA. At 371–390 the chain is on the cytoplasmic side; it reads SAFAKKDYKRAAATASRVLQ. Residues 391 to 411 form a helical membrane-spanning segment; the sequence is LGLVLGFVLAVILGAGLHFGA. Over 412-423 the chain is Extracellular; that stretch reads RVFTKDDKVLHL. A helical transmembrane segment spans residues 424–444; it reads ISIGLPFVAGTQPINALAFVF. Over 445 to 453 the chain is Cytoplasmic; it reads DGVNFGASD. Residues 454-474 traverse the membrane as a helical segment; the sequence is FGYAAASLVMVAIVSILCLLF. The Extracellular segment spans residues 475–480; that stretch reads LSSTHG. A helical transmembrane segment spans residues 481 to 501; it reads FIGLWFGLTIYMSLRAAVGFW. At 502–515 the chain is on the cytoplasmic side; it reads RIGTGTGPWSFLRS.

The protein belongs to the multi antimicrobial extrusion (MATE) (TC 2.A.66.1) family. In terms of tissue distribution, expressed in roots, but not in shoots. Detected in the mature regions of the root, extending from above the root-hair region to the root-shoot junction.

It localises to the cell membrane. In terms of biological role, citrate transporter critical for aluminum tolerance. Responsible for citrate exudation into the rhizosphere to protect roots from aluminum toxicity. The sequence is that of Protein DETOXIFICATION 42 from Arabidopsis thaliana (Mouse-ear cress).